Here is a 341-residue protein sequence, read N- to C-terminus: HTH-type transcriptional repressor PurR (341 aa).

The 55-residue stretch at 2-56 folds into the HTH lacI-type domain; that stretch reads ATIKDVAKRANVSTTTVSHVINKTRFVAEETRNAVWTAIKELHYSPSAVARSLKV. Positions 4–23 form a DNA-binding region, H-T-H motif; it reads IKDVAKRANVSTTTVSHVIN. A DNA-binding region spans residues 48-56; that stretch reads SAVARSLKV. Residues tyrosine 73, arginine 190, threonine 192, phenylalanine 221, and aspartate 275 each contribute to the hypoxanthine site.

Homodimer.

Its pathway is purine metabolism; purine nucleotide biosynthesis [regulation]. In terms of biological role, is the main repressor of the genes involved in the de novo synthesis of purine nucleotides, regulating purB, purC, purEK, purF, purHD, purL, purMN and guaBA expression. PurR is allosterically activated to bind its cognate DNA by binding the purine corepressors, hypoxanthine or guanine, thereby effecting transcription repression. The protein is HTH-type transcriptional repressor PurR of Salmonella paratyphi A (strain ATCC 9150 / SARB42).